We begin with the raw amino-acid sequence, 315 residues long: Porphobilinogen deaminase (315 aa).

An S-(dipyrrolylmethanemethyl)cysteine modification is found at C234.

Belongs to the HMBS family. In terms of assembly, monomer. Requires dipyrromethane as cofactor.

It catalyses the reaction 4 porphobilinogen + H2O = hydroxymethylbilane + 4 NH4(+). It functions in the pathway porphyrin-containing compound metabolism; protoporphyrin-IX biosynthesis; coproporphyrinogen-III from 5-aminolevulinate: step 2/4. Its function is as follows. Tetrapolymerization of the monopyrrole PBG into the hydroxymethylbilane pre-uroporphyrinogen in several discrete steps. The protein is Porphobilinogen deaminase of Mycobacterium avium (strain 104).